Here is a 394-residue protein sequence, read N- to C-terminus: MNENIVIVDAGRSAIGTFSGSLSSLSATEIGTAVLKGLLARTGLAPEQIDEVILGQVLTAGVGQNPARQTTLKAGLPHSVPAMTINKVCGSGLKAVHLAMQAIACGDADIVIAGGQESMSQSSHVLPRSRDGQRMGDWSMKDTMIVDGLWDAFNNYHMGTTAENIAQKYGFTREQQDAFAAASQQKTEAAQKAGRFQDEIIPIEIPQRKGDPKVFDADEFPRHGTTAESLGKLRPAFSRDGSVTAGNASGINDGAAMVVVMKESKAKELGLKPMARLVAFASAGVDPAIMGTGPIPASTKCLEKAGWTPADLDLIEANEAFAAQAMSVNQDMGWDLSKVNVNGGAIAIGHPIGASGARVLVTLLYEMQKRDAKKGLATLCIGGGQGVALAVERM.

The Acyl-thioester intermediate role is filled by Cys-89. Residues His-350 and Cys-380 each act as proton acceptor in the active site.

The protein belongs to the thiolase-like superfamily. Thiolase family. Homotetramer.

It is found in the cytoplasm. The enzyme catalyses 2 acetyl-CoA = acetoacetyl-CoA + CoA. Its pathway is biopolymer metabolism; poly-(R)-3-hydroxybutanoate biosynthesis. It participates in metabolic intermediate biosynthesis; (R)-mevalonate biosynthesis; (R)-mevalonate from acetyl-CoA: step 1/3. This Allochromatium vinosum (strain ATCC 17899 / DSM 180 / NBRC 103801 / NCIMB 10441 / D) (Chromatium vinosum) protein is Acetyl-CoA acetyltransferase.